The chain runs to 568 residues: DNA ligase 2 (568 aa).

E254 is an ATP binding site. K256 acts as the N6-AMP-lysine intermediate in catalysis. Residues R261, R276, E306, F346, R425, and K431 each contribute to the ATP site.

The protein belongs to the ATP-dependent DNA ligase family. Mg(2+) is required as a cofactor.

It carries out the reaction ATP + (deoxyribonucleotide)n-3'-hydroxyl + 5'-phospho-(deoxyribonucleotide)m = (deoxyribonucleotide)n+m + AMP + diphosphate.. In terms of biological role, DNA ligase that seals nicks in double-stranded DNA during DNA replication, DNA recombination and DNA repair. This Methanosarcina mazei (strain ATCC BAA-159 / DSM 3647 / Goe1 / Go1 / JCM 11833 / OCM 88) (Methanosarcina frisia) protein is DNA ligase 2.